We begin with the raw amino-acid sequence, 338 residues long: MIKRKKLYFMKITIIGSGAWGSTLAQVLTDNNNQVLLYDTNLSYVEKINQGKHPIFNTPLLNVKAVSCLKQTLEYSDLIVLAVPMKFMRHLLKKITLMLTNPKSFVNVSKGIEPLTFLRVSEIVKQVIPAPLLANFASLMGPSHAEEVILRKLTLLTAASSNPVFSLEIQKLFSCPNYLKVYTSSDLVGNEICSAFKNILALINGILVAKDFGINSQAALMSRGILEMSRLVTFYQGNPQTVLGLPGLGDLIVTAFSKYSRNFNAGAKIAAGIPYQQIIDSSLQTVEGFQTLNAFYQLQLKHNLDLPIIQASYQLIFESKPFDTVFATLIQRPYKSEF.

NADPH is bound by residues tryptophan 20 and lysine 110. 3 residues coordinate sn-glycerol 3-phosphate: lysine 110, glycine 141, and serine 143. Residue alanine 145 participates in NADPH binding. Residues lysine 197, aspartate 250, serine 260, arginine 261, and asparagine 262 each coordinate sn-glycerol 3-phosphate. Lysine 197 functions as the Proton acceptor in the catalytic mechanism. Position 261 (arginine 261) interacts with NADPH. Residue glutamate 287 participates in NADPH binding.

Belongs to the NAD-dependent glycerol-3-phosphate dehydrogenase family.

It is found in the cytoplasm. It catalyses the reaction sn-glycerol 3-phosphate + NAD(+) = dihydroxyacetone phosphate + NADH + H(+). It carries out the reaction sn-glycerol 3-phosphate + NADP(+) = dihydroxyacetone phosphate + NADPH + H(+). Its pathway is membrane lipid metabolism; glycerophospholipid metabolism. Functionally, catalyzes the reduction of the glycolytic intermediate dihydroxyacetone phosphate (DHAP) to sn-glycerol 3-phosphate (G3P), the key precursor for phospholipid synthesis. The sequence is that of Glycerol-3-phosphate dehydrogenase [NAD(P)+] from Aster yellows witches'-broom phytoplasma (strain AYWB).